A 302-amino-acid polypeptide reads, in one-letter code: uncharacterized protein (302 aa).

The 72-residue stretch at 19-90 (QWLFSVLKTA…GELDILFEDN (72 aa)) folds into the S4 RNA-binding domain. D138 is a catalytic residue. Residues 182 to 205 (KGTINSPIGRDRSHPTRRRVSPGG) form a disordered region.

The protein belongs to the pseudouridine synthase RluA family.

The enzyme catalyses a uridine in RNA = a pseudouridine in RNA. This is an uncharacterized protein from Bacillus subtilis (strain 168).